The chain runs to 211 residues: Large ribosomal subunit protein uL3 (211 aa).

The tract at residues 125-148 (GPASHGSKKWHRRPGSIGQRKTPG) is disordered.

The protein belongs to the universal ribosomal protein uL3 family. As to quaternary structure, part of the 50S ribosomal subunit. Forms a cluster with proteins L14 and L19. Also contacts proteins L13 and L17.

In terms of biological role, one of the primary rRNA binding proteins, it binds directly near the 3'-end of the 23S rRNA, where it nucleates assembly of the 50S subunit. The chain is Large ribosomal subunit protein uL3 (rplC) from Deinococcus radiodurans (strain ATCC 13939 / DSM 20539 / JCM 16871 / CCUG 27074 / LMG 4051 / NBRC 15346 / NCIMB 9279 / VKM B-1422 / R1).